We begin with the raw amino-acid sequence, 898 residues long: Fasciclin-2 (898 aa).

Residues 1–22 (MRTVACAVLLACFMGCLAGAWA) form the signal peptide. Topologically, residues 23–764 (QSAGLEILPN…EDGSEGQMSS (742 aa)) are extracellular. Ig-like C2-type domains follow at residues 31–124 (PNSE…KQLS), 134–219 (PITW…RPIR), 226–316 (PQMS…VEVT), 321–423 (PRIG…GHLM), and 428–525 (PSFA…IMLR). Residues N35, N51, N149, N192, N297, and N328 are each glycosylated (N-linked (GlcNAc...) asparagine). Cysteines 48 and 113 form a disulfide. Disulfide bonds link C156–C203 and C248–C300. A disulfide bond links C343 and C407. N-linked (GlcNAc...) asparagine glycans are attached at residues N447, N457, and N580. A disulfide bridge connects residues C450 and C509. 2 consecutive Fibronectin type-III domains span residues 532-626 (AVLQ…TPRI) and 644-745 (GTEN…VKDP). Residues 765 to 782 (AAIVVLVVAALLLALLVV) traverse the membrane as a helical segment. Topologically, residues 783-898 (DLVCCLVWRG…TSFVGKDSAV (116 aa)) are cytoplasmic.

The protein resides in the membrane. Neuronal recognition molecule. Involved in a pathway recognition for axons during the development of nerve fascicles. The protein is Fasciclin-2 (FAS2) of Schistocerca americana (American grasshopper).